Reading from the N-terminus, the 250-residue chain is tRNA (guanine-N(1)-)-methyltransferase (250 aa).

S-adenosyl-L-methionine contacts are provided by residues glycine 116 and isoleucine 136–leucine 141.

It belongs to the RNA methyltransferase TrmD family. In terms of assembly, homodimer.

The protein localises to the cytoplasm. The catalysed reaction is guanosine(37) in tRNA + S-adenosyl-L-methionine = N(1)-methylguanosine(37) in tRNA + S-adenosyl-L-homocysteine + H(+). Specifically methylates guanosine-37 in various tRNAs. This chain is tRNA (guanine-N(1)-)-methyltransferase, found in Pseudomonas putida (strain ATCC 47054 / DSM 6125 / CFBP 8728 / NCIMB 11950 / KT2440).